Here is a 549-residue protein sequence, read N- to C-terminus: Frizzled/smoothened-like sans CRD protein A (549 aa).

Residues 1 to 22 form the signal peptide; sequence MKFNFKLILIILIINQILIINC. Topologically, residues 23 to 89 are extracellular; sequence KENKILEIYK…EVNTLSLMIK (67 aa). N-linked (GlcNAc...) asparagine glycosylation occurs at Asn-63. The chain crosses the membrane as a helical span at residues 90–110; sequence ITGTISFIASLILLLIYSPLI. At 111–119 the chain is on the cytoplasmic side; that stretch reads NRMGYNRHT. A helical transmembrane segment spans residues 120–140; the sequence is IGIFFLTFSVFLIMLTDIIYV. Topologically, residues 141–162 are extracellular; the sequence is HHGNDLICPQSHRYSRQNDSGC. Asn-158 carries an N-linked (GlcNAc...) asparagine glycan. A helical transmembrane segment spans residues 163–183; it reads TITGILFQYGCIAAVLFWATL. The Cytoplasmic portion of the chain corresponds to 184–198; sequence SLDLYLTLKKISTKK. The chain crosses the membrane as a helical span at residues 199–219; sequence VEKWYLIILTLIALILTFVPL. The Extracellular portion of the chain corresponds to 220 to 241; the sequence is VKKSYGYLVTGLACWILDSTDQ. The chain crosses the membrane as a helical span at residues 242–262; that stretch reads IIFFWAPFTAILGIGSILIVL. Over 263–287 the chain is Cytoplasmic; it reads VVYEIYKISKITKQNRGIFQSHIRP. Residues 288–308 traverse the membrane as a helical segment; sequence LLMVLFIFGQFLFILAFNALI. Topologically, residues 309 to 346 are extracellular; it reads NNKYDEYSARMDSYIDCLFSSSSYSYLCRLKTFPFEME. A helical transmembrane segment spans residues 347–367; the sequence is FIVLFFLRLIGIEVLIFYGFT. Residues 368-549 are Cytoplasmic-facing; it reads QQTKKILLHS…NNNSNNDENN (182 aa). 2 stretches are compositionally biased toward low complexity: residues 417-474 and 536-549; these read NNNN…SQQN and NKNI…DENN. 2 disordered regions span residues 417-483 and 528-549; these read NNNN…QKLS and QYEE…DENN. Residues 432–475 adopt a coiled-coil conformation; it reads NNLNNNLNNNNLNNNNNLNNLNNLNINNNLKNSQNNLNNSQQNE.

It belongs to the G-protein coupled receptor Fz/Smo family.

The protein resides in the membrane. This Dictyostelium discoideum (Social amoeba) protein is Frizzled/smoothened-like sans CRD protein A (fscA).